The chain runs to 49 residues: Small, acid-soluble spore protein O (49 aa).

A disordered region spans residues 23-49 (AGYNEKFSNEPLTEAQRQNNKKRKKNQ).

Belongs to the SspO family.

Its subcellular location is the spore core. This chain is Small, acid-soluble spore protein O, found in Geobacillus thermodenitrificans (strain NG80-2).